Reading from the N-terminus, the 556-residue chain is 2-succinyl-5-enolpyruvyl-6-hydroxy-3-cyclohexene-1-carboxylate synthase (556 aa).

The protein belongs to the TPP enzyme family. MenD subfamily. In terms of assembly, homodimer. The cofactor is Mg(2+). Mn(2+) serves as cofactor. Thiamine diphosphate is required as a cofactor.

It catalyses the reaction isochorismate + 2-oxoglutarate + H(+) = 5-enolpyruvoyl-6-hydroxy-2-succinyl-cyclohex-3-ene-1-carboxylate + CO2. It participates in quinol/quinone metabolism; 1,4-dihydroxy-2-naphthoate biosynthesis; 1,4-dihydroxy-2-naphthoate from chorismate: step 2/7. The protein operates within quinol/quinone metabolism; menaquinone biosynthesis. Its function is as follows. Catalyzes the thiamine diphosphate-dependent decarboxylation of 2-oxoglutarate and the subsequent addition of the resulting succinic semialdehyde-thiamine pyrophosphate anion to isochorismate to yield 2-succinyl-5-enolpyruvyl-6-hydroxy-3-cyclohexene-1-carboxylate (SEPHCHC). This chain is 2-succinyl-5-enolpyruvyl-6-hydroxy-3-cyclohexene-1-carboxylate synthase, found in Saccharopolyspora erythraea (strain ATCC 11635 / DSM 40517 / JCM 4748 / NBRC 13426 / NCIMB 8594 / NRRL 2338).